The chain runs to 265 residues: Interleukin-1 alpha (265 aa).

The propeptide occupies 1 to 108 (MAKVPDLFED…DTEEVIMKPR (108 aa)). Lysine 78 is modified (N6-acetyllysine). The interval 78–82 (KKRRL) is nuclear localization signal (NLS). The residue at position 83 (serine 83) is a Phosphoserine. N-linked (GlcNAc...) asparagine glycans are attached at residues asparagine 98 and asparagine 137.

This sequence belongs to the IL-1 family. In terms of assembly, monomer. Interacts with TMED10; the interaction mediates the translocation from the cytoplasm into the ERGIC (endoplasmic reticulum-Golgi intermediate compartment) and thereby secretion. Interacts with IL1R1. Interacts with S100A13; this interaction is the first step in the export of IL1A, followed by direct translocation of this complex across the plasma membrane. Acetylated within its nuclear localization sequence, which impacts subcellular localization. Post-translationally, proteolytic processed by CAPN1 in a calcium-dependent manner. Cleavage from 31 kDa precursor to 18 kDa biologically active molecules. In terms of processing, phosphorylated. Phosphorylation greatly enhances susceptibility to digestion and promotes the conversion of pre-IL1A alpha to the biologically active IL1A.

It is found in the nucleus. It localises to the cytoplasm. The protein localises to the secreted. Its function is as follows. Cytokine constitutively present intracellularly in nearly all resting non-hematopoietic cells that plays an important role in inflammation and bridges the innate and adaptive immune systems. After binding to its receptor IL1R1 together with its accessory protein IL1RAP, forms the high affinity interleukin-1 receptor complex. Signaling involves the recruitment of adapter molecules such as MYD88, IRAK1 or IRAK4. In turn, mediates the activation of NF-kappa-B and the three MAPK pathways p38, p42/p44 and JNK pathways. Within the cell, acts as an alarmin and cell death results in its liberation in the extracellular space after disruption of the cell membrane to induce inflammation and alert the host to injury or damage. In addition to its role as a danger signal, which occurs when the cytokine is passively released by cell necrosis, directly senses DNA damage and acts as signal for genotoxic stress without loss of cell integrity. The polypeptide is Interleukin-1 alpha (IL1A) (Canis lupus familiaris (Dog)).